We begin with the raw amino-acid sequence, 98 residues long: MSMVYINLFLAFIMSLMGLLVYRSHLMSSLLCLEGMMLSLFIMISITILSNHFTLASMAPIILLVFAACEAALGLSLLVMVSNTYGTDYVQNLNLLQC.

A run of 3 helical transmembrane segments spans residues 1-21, 29-49, and 61-81; these read MSMV…GLLV, SLLC…ITIL, and IILL…LVMV.

It belongs to the complex I subunit 4L family. As to quaternary structure, core subunit of respiratory chain NADH dehydrogenase (Complex I) which is composed of 45 different subunits.

Its subcellular location is the mitochondrion inner membrane. The enzyme catalyses a ubiquinone + NADH + 5 H(+)(in) = a ubiquinol + NAD(+) + 4 H(+)(out). In terms of biological role, core subunit of the mitochondrial membrane respiratory chain NADH dehydrogenase (Complex I) which catalyzes electron transfer from NADH through the respiratory chain, using ubiquinone as an electron acceptor. Part of the enzyme membrane arm which is embedded in the lipid bilayer and involved in proton translocation. This Mephitis mephitis (Striped skunk) protein is NADH-ubiquinone oxidoreductase chain 4L (MT-ND4L).